Here is a 177-residue protein sequence, read N- to C-terminus: ATP-dependent protease subunit HslV (177 aa).

The active site involves T7. A162, C165, and T168 together coordinate Na(+).

It belongs to the peptidase T1B family. HslV subfamily. In terms of assembly, a double ring-shaped homohexamer of HslV is capped on each side by a ring-shaped HslU homohexamer. The assembly of the HslU/HslV complex is dependent on binding of ATP.

The protein resides in the cytoplasm. It catalyses the reaction ATP-dependent cleavage of peptide bonds with broad specificity.. With respect to regulation, allosterically activated by HslU binding. Protease subunit of a proteasome-like degradation complex believed to be a general protein degrading machinery. The sequence is that of ATP-dependent protease subunit HslV from Leptospira biflexa serovar Patoc (strain Patoc 1 / Ames).